Consider the following 295-residue polypeptide: Glutamyl-Q tRNA(Asp) synthetase (295 aa).

L-glutamate contacts are provided by residues 9–13 (RFAPT) and Glu-45. A 'HIGH' region motif is present at residues 12 to 22 (PTPSGFLHFGS). 4 residues coordinate Zn(2+): Cys-101, Cys-103, Tyr-115, and Cys-119. L-glutamate is bound by residues Tyr-172 and Arg-190. Residues 228–232 (KLGKS) carry the 'KMSKS' region motif. Lys-231 serves as a coordination point for ATP.

The protein belongs to the class-I aminoacyl-tRNA synthetase family. GluQ subfamily. It depends on Zn(2+) as a cofactor.

Functionally, catalyzes the tRNA-independent activation of glutamate in presence of ATP and the subsequent transfer of glutamate onto a tRNA(Asp). Glutamate is transferred on the 2-amino-5-(4,5-dihydroxy-2-cyclopenten-1-yl) moiety of the queuosine in the wobble position of the QUC anticodon. This chain is Glutamyl-Q tRNA(Asp) synthetase, found in Pseudomonas entomophila (strain L48).